Consider the following 427-residue polypeptide: Glutamate-1-semialdehyde 2,1-aminomutase (427 aa).

Lys269 carries the post-translational modification N6-(pyridoxal phosphate)lysine.

The protein belongs to the class-III pyridoxal-phosphate-dependent aminotransferase family. HemL subfamily. Homodimer. The cofactor is pyridoxal 5'-phosphate.

The protein localises to the cytoplasm. It catalyses the reaction (S)-4-amino-5-oxopentanoate = 5-aminolevulinate. It functions in the pathway porphyrin-containing compound metabolism; protoporphyrin-IX biosynthesis; 5-aminolevulinate from L-glutamyl-tRNA(Glu): step 2/2. This Thermus thermophilus (strain ATCC BAA-163 / DSM 7039 / HB27) protein is Glutamate-1-semialdehyde 2,1-aminomutase.